The sequence spans 827 residues: Multiphosphoryl transfer protein (827 aa).

The 141-residue stretch at 2 to 142 (IPLTSELVAI…AVIVARLTGA (141 aa)) folds into the PTS EIIA type-2 domain. His62 functions as the Tele-phosphohistidine intermediate; for EIIA activity in the catalytic mechanism. His62 carries the post-translational modification Phosphohistidine; by HPr. An HPr domain is found at 157–245 (AQGIDVVVTG…AFEAGLEDEE (89 aa)). Residue His171 is the Pros-phosphohistidine intermediate; for HPr activity of the active site. Position 171 is a phosphohistidine; by EI (His171). The PTS EI stretch occupies residues 270–827 (EGRTLVGISS…TTAAEVRGLK (558 aa)). Catalysis depends on His457, which acts as the Tele-phosphohistidine intermediate; for PTS EI activity. Phosphohistidine; by autocatalysis is present on His457. Residues Arg564 and Arg600 each coordinate phosphoenolpyruvate. Mg(2+) is bound by residues Glu693 and Asp717. Residues 716–717 (ND) and Arg727 contribute to the phosphoenolpyruvate site. Cys764 acts as the Proton donor in catalysis.

The protein belongs to the PEP-utilizing enzyme family. Requires Mg(2+) as cofactor.

It localises to the cytoplasm. It carries out the reaction L-histidyl-[protein] + phosphoenolpyruvate = N(pros)-phospho-L-histidyl-[protein] + pyruvate. In terms of biological role, the phosphoenolpyruvate-dependent sugar phosphotransferase system (sugar PTS), a major carbohydrate active transport system, catalyzes the phosphorylation of incoming sugar substrates concomitantly with their translocation across the cell membrane. The enzyme II FruAB PTS system is involved in fructose transport. This is Multiphosphoryl transfer protein from Rhodobacter capsulatus (Rhodopseudomonas capsulata).